The chain runs to 348 residues: Dihydroorotase (348 aa).

Residues His-14 and His-16 each contribute to the Zn(2+) site. Residues 16 to 18 (HLR) and Asn-42 contribute to the substrate site. Zn(2+)-binding residues include Lys-100, His-137, and His-175. The residue at position 100 (Lys-100) is an N6-carboxylysine. Position 137 (His-137) interacts with substrate. Leu-220 contributes to the substrate binding site. Asp-248 is a Zn(2+) binding site. Residue Asp-248 is part of the active site. Substrate contacts are provided by His-252 and Ala-264.

The protein belongs to the metallo-dependent hydrolases superfamily. DHOase family. Class II DHOase subfamily. Homodimer. The cofactor is Zn(2+).

It catalyses the reaction (S)-dihydroorotate + H2O = N-carbamoyl-L-aspartate + H(+). The protein operates within pyrimidine metabolism; UMP biosynthesis via de novo pathway; (S)-dihydroorotate from bicarbonate: step 3/3. Its function is as follows. Catalyzes the reversible cyclization of carbamoyl aspartate to dihydroorotate. This is Dihydroorotase from Pseudomonas putida (strain GB-1).